The following is an 841-amino-acid chain: Translation initiation factor IF-2 (841 aa).

Residues 94–255 are disordered; sequence QRSPEEIEAE…RNAHGFQSPT (162 aa). The segment covering 96-135 has biased composition (basic and acidic residues); it reads SPEEIEAERKREMDERRAVENAARQKAEEEAKRRAEEDAR. A compositionally biased stretch (low complexity) spans 136 to 175; that stretch reads NQPAAGQPASAPAQPVAAAEPVREAPAAAAPAPASAAPSA. 2 stretches are compositionally biased toward basic and acidic residues: residues 176-217 and 225-234; these read DARK…EKAP and TTDEESDSFR. The span at 235-248 shows a compositional bias: basic residues; it reads RGGRGKGKLKKRNA. The tr-type G domain maps to 341–510; the sequence is SRAPVVTVMG…LLQAEVLELK (170 aa). The tract at residues 350-357 is G1; the sequence is GHVDHGKT. Position 350-357 (350-357) interacts with GTP; that stretch reads GHVDHGKT. Residues 375 to 379 form a G2 region; the sequence is GITQH. Residues 396–399 form a G3 region; it reads DTPG. GTP is bound by residues 396–400 and 450–453; these read DTPGH and NKID. Positions 450 to 453 are G4; the sequence is NKID. The segment at 486-488 is G5; it reads SAK.

Belongs to the TRAFAC class translation factor GTPase superfamily. Classic translation factor GTPase family. IF-2 subfamily.

The protein localises to the cytoplasm. In terms of biological role, one of the essential components for the initiation of protein synthesis. Protects formylmethionyl-tRNA from spontaneous hydrolysis and promotes its binding to the 30S ribosomal subunits. Also involved in the hydrolysis of GTP during the formation of the 70S ribosomal complex. This chain is Translation initiation factor IF-2, found in Pseudomonas syringae pv. tomato (strain ATCC BAA-871 / DC3000).